The sequence spans 297 residues: Protein phosphatase PTC7 homolog (297 aa).

Residues 1–27 (MLSVLSYGRLVARAVIGGLSQTDSRDY) constitute a mitochondrion transit peptide. Residues 28–292 (SLVSASFGFG…DDITVLLSIV (265 aa)) form the PPM-type phosphatase domain. Residues D71, G72, and D216 each contribute to the Mn(2+) site.

The protein belongs to the PP2C family. It depends on Mg(2+) as a cofactor. The cofactor is Mn(2+).

The protein localises to the mitochondrion matrix. The enzyme catalyses O-phospho-L-seryl-[protein] + H2O = L-seryl-[protein] + phosphate. It carries out the reaction O-phospho-L-threonyl-[protein] + H2O = L-threonyl-[protein] + phosphate. Protein phosphatase which positively regulates biosynthesis of the ubiquinone, coenzyme Q. Dephosphorylates the ubiquinone biosynthesis protein coq7 which is likely to lead to its activation. This is Protein phosphatase PTC7 homolog (pptc7) from Danio rerio (Zebrafish).